A 122-amino-acid polypeptide reads, in one-letter code: DLWQFGQMILKETGKLPFPYYTTYGCYCGWGGQGQPKDATDRCCFVHDCCYGKLTNCKPKTDRYSYSRENGVIICGEGTPCEKQICECDKAAAVCFRENLRTYKXXYMAYPDVLCKKPAEKC.

7 disulfide bridges follow: C26–C115, C28–C44, C43–C95, C49–C122, C50–C88, C57–C81, and C75–C86. Residues Y27, G29, and G31 each contribute to the Ca(2+) site. The active site involves H47. D48 provides a ligand contact to Ca(2+). Residue D89 is part of the active site.

The protein belongs to the phospholipase A2 family. Group II subfamily. D49 sub-subfamily. Requires Ca(2+) as cofactor. In terms of tissue distribution, expressed by the venom gland.

It is found in the secreted. The enzyme catalyses a 1,2-diacyl-sn-glycero-3-phosphocholine + H2O = a 1-acyl-sn-glycero-3-phosphocholine + a fatty acid + H(+). In terms of biological role, snake venom phospholipase A2 (PLA2) that does not inhibit platelet aggregation. Exhibits cytotoxic and anticoagulant activity. Induces Ehrlich tumor growth but not angiogenesis. PLA2 catalyzes the calcium-dependent hydrolysis of the 2-acyl groups in 3-sn-phosphoglycerides. The chain is Basic phospholipase A2 from Bothrops leucurus (Whitetail lancehead).